Consider the following 556-residue polypeptide: Arginine--tRNA ligase (556 aa).

Residues Ala-132 to His-142 carry the 'HIGH' region motif.

It belongs to the class-I aminoacyl-tRNA synthetase family. Monomer.

Its subcellular location is the cytoplasm. It catalyses the reaction tRNA(Arg) + L-arginine + ATP = L-arginyl-tRNA(Arg) + AMP + diphosphate. The chain is Arginine--tRNA ligase from Listeria welshimeri serovar 6b (strain ATCC 35897 / DSM 20650 / CCUG 15529 / CIP 8149 / NCTC 11857 / SLCC 5334 / V8).